A 239-amino-acid polypeptide reads, in one-letter code: DNA repair protein RecO (239 aa).

The protein belongs to the RecO family.

Its function is as follows. Involved in DNA repair and RecF pathway recombination. The chain is DNA repair protein RecO from Stenotrophomonas maltophilia (strain R551-3).